Consider the following 256-residue polypeptide: Nickel import ATP-binding protein NikD (256 aa).

Residues 6–245 (LEIRGLRIET…PASATARTLL (240 aa)) enclose the ABC transporter domain. 38–45 (GASGSGKS) contacts ATP.

It belongs to the ABC transporter superfamily. Nickel importer (TC 3.A.1.5.3) family. As to quaternary structure, the complex is composed of two ATP-binding proteins (NikD and NikE), two transmembrane proteins (NikB and NikC) and a solute-binding protein (NikA).

It localises to the cell inner membrane. The enzyme catalyses Ni(2+)(out) + ATP + H2O = Ni(2+)(in) + ADP + phosphate + H(+). In terms of biological role, part of the ABC transporter complex NikABCDE involved in nickel import. Responsible for energy coupling to the transport system. The protein is Nickel import ATP-binding protein NikD of Pseudomonas putida (strain ATCC 47054 / DSM 6125 / CFBP 8728 / NCIMB 11950 / KT2440).